Consider the following 79-residue polypeptide: Ferredoxin oxidoreductase 1 subunit ForD (79 aa).

4Fe-4S ferredoxin-type domains follow at residues 3–35 (YVAQ…YTDE) and 37–65 (HHAY…RDSI). Positions 12, 17, 20, 24, 46, 49, 52, and 56 each coordinate [4Fe-4S] cluster.

Heterotetramer of one alpha, one beta, one delta and one gamma chain. It depends on [4Fe-4S] cluster as a cofactor.

In Aquifex aeolicus (strain VF5), this protein is Ferredoxin oxidoreductase 1 subunit ForD (forD1).